The primary structure comprises 169 residues: NADH-quinone oxidoreductase subunit B (169 aa).

[4Fe-4S] cluster is bound by residues Cys-42, Cys-43, Cys-107, and Cys-136.

This sequence belongs to the complex I 20 kDa subunit family. NDH-1 is composed of 14 different subunits. Subunits NuoB, C, D, E, F, and G constitute the peripheral sector of the complex. The cofactor is [4Fe-4S] cluster.

Its subcellular location is the cell inner membrane. The enzyme catalyses a quinone + NADH + 5 H(+)(in) = a quinol + NAD(+) + 4 H(+)(out). Functionally, NDH-1 shuttles electrons from NADH, via FMN and iron-sulfur (Fe-S) centers, to quinones in the respiratory chain. Couples the redox reaction to proton translocation (for every two electrons transferred, four hydrogen ions are translocated across the cytoplasmic membrane), and thus conserves the redox energy in a proton gradient. The polypeptide is NADH-quinone oxidoreductase subunit B (Campylobacter hominis (strain ATCC BAA-381 / DSM 21671 / CCUG 45161 / LMG 19568 / NCTC 13146 / CH001A)).